Here is a 176-residue protein sequence, read N- to C-terminus: ATP-dependent protease subunit HslV (176 aa).

The active site involves T6. Na(+) contacts are provided by S161, C164, and T167.

The protein belongs to the peptidase T1B family. HslV subfamily. As to quaternary structure, a double ring-shaped homohexamer of HslV is capped on each side by a ring-shaped HslU homohexamer. The assembly of the HslU/HslV complex is dependent on binding of ATP.

The protein localises to the cytoplasm. The catalysed reaction is ATP-dependent cleavage of peptide bonds with broad specificity.. With respect to regulation, allosterically activated by HslU binding. Its function is as follows. Protease subunit of a proteasome-like degradation complex believed to be a general protein degrading machinery. The sequence is that of ATP-dependent protease subunit HslV from Thermosipho africanus (strain TCF52B).